A 498-amino-acid polypeptide reads, in one-letter code: Probable deoxyguanosinetriphosphate triphosphohydrolase (498 aa).

One can recognise an HD domain in the interval 71-262; sequence RLTHSLEVQQ…MEAADDISYC (192 aa).

The protein belongs to the dGTPase family. Type 1 subfamily. Mg(2+) is required as a cofactor.

The enzyme catalyses dGTP + H2O = 2'-deoxyguanosine + triphosphate + H(+). Its function is as follows. dGTPase preferentially hydrolyzes dGTP over the other canonical NTPs. This Pseudomonas aeruginosa (strain ATCC 15692 / DSM 22644 / CIP 104116 / JCM 14847 / LMG 12228 / 1C / PRS 101 / PAO1) protein is Probable deoxyguanosinetriphosphate triphosphohydrolase.